Consider the following 359-residue polypeptide: UPF0284 protein MTH_1426 (359 aa).

It belongs to the UPF0284 family.

The polypeptide is UPF0284 protein MTH_1426 (Methanothermobacter thermautotrophicus (strain ATCC 29096 / DSM 1053 / JCM 10044 / NBRC 100330 / Delta H) (Methanobacterium thermoautotrophicum)).